We begin with the raw amino-acid sequence, 172 residues long: Cytidylate kinase (172 aa).

Residue G4–T12 participates in ATP binding.

This sequence belongs to the cytidylate kinase family. Type 2 subfamily.

It is found in the cytoplasm. It catalyses the reaction CMP + ATP = CDP + ADP. The enzyme catalyses dCMP + ATP = dCDP + ADP. The polypeptide is Cytidylate kinase (cmk) (Aeropyrum pernix (strain ATCC 700893 / DSM 11879 / JCM 9820 / NBRC 100138 / K1)).